We begin with the raw amino-acid sequence, 734 residues long: Photosystem I P700 chlorophyll a apoprotein A2 (734 aa).

8 helical membrane-spanning segments follow: residues 46 to 69, 135 to 158, 175 to 199, 273 to 291, 330 to 353, 369 to 395, 417 to 439, and 517 to 535; these read IFAS…FHVA, LYVG…LHLQ, LNHH…HVAI, MAHH…GHMY, LHFQ…QHMY, ASLY…IFFV, AIIS…LYVH, and FLVH…LILV. [4Fe-4S] cluster-binding residues include Cys559 and Cys568. Transmembrane regions (helical) follow at residues 575-596 and 643-665; these read AFYL…YFHW and LSVW…MFLI. His654, Met662, and Tyr670 together coordinate chlorophyll a. Residue Trp671 coordinates phylloquinone. A helical transmembrane segment spans residues 707–727; that stretch reads LVGLTHFSVGYVLTYAAFLIA.

Belongs to the PsaA/PsaB family. The PsaA/B heterodimer binds the P700 chlorophyll special pair and subsequent electron acceptors. PSI consists of a core antenna complex that captures photons, and an electron transfer chain that converts photonic excitation into a charge separation. The eukaryotic PSI reaction center is composed of at least 11 subunits. It depends on P700 is a chlorophyll a/chlorophyll a' dimer, A0 is one or more chlorophyll a, A1 is one or both phylloquinones and FX is a shared 4Fe-4S iron-sulfur center. as a cofactor.

The protein localises to the plastid. The protein resides in the chloroplast thylakoid membrane. It catalyses the reaction reduced [plastocyanin] + hnu + oxidized [2Fe-2S]-[ferredoxin] = oxidized [plastocyanin] + reduced [2Fe-2S]-[ferredoxin]. Functionally, psaA and PsaB bind P700, the primary electron donor of photosystem I (PSI), as well as the electron acceptors A0, A1 and FX. PSI is a plastocyanin/cytochrome c6-ferredoxin oxidoreductase, converting photonic excitation into a charge separation, which transfers an electron from the donor P700 chlorophyll pair to the spectroscopically characterized acceptors A0, A1, FX, FA and FB in turn. Oxidized P700 is reduced on the lumenal side of the thylakoid membrane by plastocyanin or cytochrome c6. The sequence is that of Photosystem I P700 chlorophyll a apoprotein A2 from Chlorella vulgaris (Green alga).